We begin with the raw amino-acid sequence, 278 residues long: Elongation factor Ts (278 aa).

Residues Thr-80–Val-83 are involved in Mg(2+) ion dislocation from EF-Tu.

This sequence belongs to the EF-Ts family.

It localises to the cytoplasm. Functionally, associates with the EF-Tu.GDP complex and induces the exchange of GDP to GTP. It remains bound to the aminoacyl-tRNA.EF-Tu.GTP complex up to the GTP hydrolysis stage on the ribosome. The sequence is that of Elongation factor Ts from Renibacterium salmoninarum (strain ATCC 33209 / DSM 20767 / JCM 11484 / NBRC 15589 / NCIMB 2235).